The primary structure comprises 138 residues: Acidic phospholipase A2 RV-7 (138 aa).

An N-terminal signal peptide occupies residues 1–16 (MRTLWIVAVCLIGVEG). 7 cysteine pairs are disulfide-bonded: Cys-42-Cys-131, Cys-44-Cys-60, Cys-59-Cys-111, Cys-65-Cys-138, Cys-66-Cys-104, Cys-73-Cys-97, and Cys-91-Cys-102. Residues Tyr-43, Gly-45, and Gly-47 each contribute to the Ca(2+) site. The active site involves His-63. Ca(2+) is bound at residue Asp-64. Asp-105 is a catalytic residue.

This sequence belongs to the phospholipase A2 family. Group II subfamily. D49 sub-subfamily. In terms of assembly, heterodimer of a weakly toxic basic protein having phospholipase A2 activity (RV-4) and a non-toxic acidic protein which inhibits its enzymatic activity but potentiates its lethal potency and neurotoxicity (RV-7). Requires Ca(2+) as cofactor. As to expression, expressed by the venom gland.

It localises to the secreted. It catalyses the reaction a 1,2-diacyl-sn-glycero-3-phosphocholine + H2O = a 1-acyl-sn-glycero-3-phosphocholine + a fatty acid + H(+). Functionally, heterodimer: RV-4/RV-7 targets the presynaptic sites of the neuromuscular junction. In terms of biological role, monomer: snake venom phospholipase A2 (PLA2) RV-7 that has low enzymatic activity and is not toxic. It inhibits the enzymatic activity of RV-4 in vitro but potentiates its lethal potency and neurotoxicity. It may facilitate the specific binding of RV-4 to its presynaptic binding sites, probably by acting as a chaperone, minimizing distraction and destruction of RV-4 en route to the site of action by reducing non-specific binding to muscle and other organs. PLA2 catalyzes the calcium-dependent hydrolysis of the 2-acyl groups in 3-sn-phosphoglycerides. This is Acidic phospholipase A2 RV-7 from Daboia siamensis (Eastern Russel's viper).